Reading from the N-terminus, the 370-residue chain is Zinc finger protein 830 (370 aa).

Disordered regions lie at residues 1–21 and 75–220; these read MASS…QEEL and HRER…LVPH. Alanine 2 is modified (N-acetylalanine). The stretch at 16–40 forms a coiled coil; that stretch reads VNQEELRRLMKEKQRLSTNRKRIES. A C2H2-type zinc finger spans residues 53-75; that stretch reads CALCNTPVKSELLWQTHVLGKQH. Polar residues predominate over residues 90-99; that stretch reads QGPSAGTAPQ. Basic and acidic residues predominate over residues 104-115; sequence KTTDVESQDAKK. The span at 121–134 shows a compositional bias: polar residues; sequence DQVQPSTSASSANF. The segment covering 156 to 171 has biased composition (acidic residues); it reads DYEEEEEEEEEEELGG. A compositionally biased stretch (basic and acidic residues) spans 172-191; the sequence is GEERRDSSKHLPDAQGREHS. Residues 196 to 212 show a composition bias toward polar residues; it reads RETTSNVLPNDPFNTNP. Phosphoserine is present on serine 223. Positions 310-338 form a coiled coil; it reads IECYRRVEKLRNRQDEIKNKLKEVLTIKE. Residues serine 349 and serine 360 each carry the phosphoserine modification.

Component of the XAB2 complex, a multimeric protein complex composed of XAB2, PRPF19, AQR, ZNF830, ISY1, and PPIE; this complex binds preferentially to RNA. Interacts with XAB2. Identified in a pentameric intron-binding (IB) complex composed of AQR, XAB2, ISY1, ZNF830 and PPIE that is incorporated into the spliceosome as a preassembled complex. The IB complex does not contain PRPF19. Phosphorylated in response to DNA damage by the cell cycle checkpoint kinases ATR/ATM.

It localises to the nucleus. Its subcellular location is the chromosome. It is found in the nucleus speckle. Functionally, may play a role in pre-mRNA splicing as component of the spliceosome. Acts as an important regulator of the cell cycle that participates in the maintenance of genome integrity. During cell cycle progression in embryonic fibroblast, prevents replication fork collapse, double-strand break formation and cell cycle checkpoint activation. Controls mitotic cell cycle progression and cell survival in rapidly proliferating intestinal epithelium and embryonic stem cells. During the embryo preimplantation, controls different aspects of M phase. During early oocyte growth, plays a role in oocyte survival by preventing chromosomal breaks formation, activation of TP63 and reduction of transcription. The protein is Zinc finger protein 830 of Rattus norvegicus (Rat).